Reading from the N-terminus, the 191-residue chain is Ribonuclease HII (191 aa).

Residues 7–191 (ILMAGVDEVG…YSPVADLISK (185 aa)) enclose the RNase H type-2 domain. A divalent metal cation contacts are provided by Asp13, Glu14, and Asp103.

Belongs to the RNase HII family. Mn(2+) is required as a cofactor. It depends on Mg(2+) as a cofactor.

It localises to the cytoplasm. It catalyses the reaction Endonucleolytic cleavage to 5'-phosphomonoester.. In terms of biological role, endonuclease that specifically degrades the RNA of RNA-DNA hybrids. The sequence is that of Ribonuclease HII from Legionella pneumophila subsp. pneumophila (strain Philadelphia 1 / ATCC 33152 / DSM 7513).